The primary structure comprises 281 residues: Acetyl-coenzyme A carboxylase carboxyl transferase subunit beta (281 aa).

Residues 23–281 (LWSKCEDCGA…KTLAMMRVEG (259 aa)) enclose the CoA carboxyltransferase N-terminal domain. 4 residues coordinate Zn(2+): Cys-27, Cys-30, Cys-46, and Cys-49. The C4-type zinc-finger motif lies at 27–49 (CEDCGAMLHRRQLEENLNTCNEC).

Belongs to the AccD/PCCB family. In terms of assembly, acetyl-CoA carboxylase is a heterohexamer composed of biotin carboxyl carrier protein (AccB), biotin carboxylase (AccC) and two subunits each of ACCase subunit alpha (AccA) and ACCase subunit beta (AccD). It depends on Zn(2+) as a cofactor.

It is found in the cytoplasm. It catalyses the reaction N(6)-carboxybiotinyl-L-lysyl-[protein] + acetyl-CoA = N(6)-biotinyl-L-lysyl-[protein] + malonyl-CoA. It participates in lipid metabolism; malonyl-CoA biosynthesis; malonyl-CoA from acetyl-CoA: step 1/1. In terms of biological role, component of the acetyl coenzyme A carboxylase (ACC) complex. Biotin carboxylase (BC) catalyzes the carboxylation of biotin on its carrier protein (BCCP) and then the CO(2) group is transferred by the transcarboxylase to acetyl-CoA to form malonyl-CoA. This Chlorobium luteolum (strain DSM 273 / BCRC 81028 / 2530) (Pelodictyon luteolum) protein is Acetyl-coenzyme A carboxylase carboxyl transferase subunit beta.